A 382-amino-acid polypeptide reads, in one-letter code: RIB43A-like with coiled-coils protein 2 (382 aa).

The stretch at 222–255 (NKSQAIESVERKKQEKKQEQEDNLAEITNLLRGD) forms a coiled coil.

It belongs to the RIB43A family. As to quaternary structure, microtubule inner protein component of sperm flagellar doublet microtubules. Expressed in airway epithelial cells.

It localises to the cytoplasm. The protein resides in the cytoskeleton. It is found in the cilium axoneme. The protein localises to the flagellum axoneme. In terms of biological role, microtubule inner protein (MIP) part of the dynein-decorated doublet microtubules (DMTs) in cilia axoneme, which is required for motile cilia beating. In Homo sapiens (Human), this protein is RIB43A-like with coiled-coils protein 2.